We begin with the raw amino-acid sequence, 666 residues long: 7SK snRNA methylphosphate capping enzyme (666 aa).

N-acetylmethionine is present on Met-1. The span at 1–10 shows a compositional bias: basic and acidic residues; that stretch reads MIEMAAEKEP. The interval 1–141 is disordered; it reads MIEMAAEKEP…GSGGSFKHPA (141 aa). The span at 50 to 61 shows a compositional bias: low complexity; the sequence is GPGPRAHSAGAA. Residue Ser-57 is modified to Phosphoserine. Arg-91 is modified (omega-N-methylarginine). 3 positions are modified to phosphoserine: Ser-126, Ser-150, and Ser-154. Thr-188 bears the Phosphothreonine mark. Residues Ser-191, Ser-192, and Ser-229 each carry the phosphoserine modification. The span at 235-244 shows a compositional bias: basic residues; the sequence is RKRHRHRGPH. The disordered stretch occupies residues 235 to 291; the sequence is RKRHRHRGPHHQQQQQASGGNDSNAAVLPTDPLTPSLHGEGATQQQQNRGQNRDAPQ. The span at 245–254 shows a compositional bias: low complexity; that stretch reads HQQQQQASGG. Phosphothreonine is present on Thr-268. 2 positions are modified to phosphoserine: Ser-307 and Ser-321. The segment covering 309-337 has biased composition (low complexity); the sequence is LPSALQGSSGSLSAPPAASVTSAPSTSSS. Positions 309–383 are disordered; it reads LPSALQGSSG…HHHPLPATGF (75 aa). Positions 338 to 347 are enriched in basic residues; it reads SRHRKRRRTS. Residue Ser-368 is modified to Phosphoserine. Residues Tyr-399, Arg-410, 428–430, 451–452, 536–537, and Phe-558 each bind S-adenosyl-L-methionine; these read GCN, DI, and NY. A Bin3-type SAM domain is found at 408-663; sequence DVRLRVLKPE…PVYLFHKARS (256 aa). Lys-620 participates in a covalent cross-link: Glycyl lysine isopeptide (Lys-Gly) (interchain with G-Cter in SUMO2).

Belongs to the methyltransferase superfamily. As to quaternary structure, core component of the 7SK RNP complex, at least composed of 7SK RNA, LARP7, MEPCE, HEXIM1 (or HEXIM2) and P-TEFb (composed of CDK9 and CCNT1/cyclin-T1). Interacts with METTL16. Interacts with RBM7; upon genotoxic stress this interaction is enhanced, triggering the release of inactive P-TEFb complex from the core, yielding to P-TEFb complex activation. In terms of processing, dephosphorylated at Ser-126 by the PNUTS-PP1 complex, promoting RNA polymerase II transcription pause-release.

It is found in the nucleus. The catalysed reaction is a 5'-end triphospho-guanosine-ribonucleotide-snRNA + S-adenosyl-L-methionine = a 5'-end methyltriphosphate-guanosine-ribonucleotide-snRNA + S-adenosyl-L-homocysteine. Functionally, S-adenosyl-L-methionine-dependent methyltransferase that adds a methylphosphate cap at the 5'-end of 7SK snRNA (7SK RNA), leading to stabilize it. Also has a non-enzymatic function as part of the 7SK RNP complex: the 7SK RNP complex sequesters the positive transcription elongation factor b (P-TEFb) in a large inactive 7SK RNP complex preventing RNA polymerase II phosphorylation and subsequent transcriptional elongation. The 7SK RNP complex also promotes snRNA gene transcription by RNA polymerase II via interaction with the little elongation complex (LEC). In the 7SK RNP complex, MEPCE is required to stabilize 7SK RNA and facilitate the assembly of 7SK RNP complex. MEPCE has a non-enzymatic function in the 7SK RNP complex; it has a non-enzymatic function; interaction with LARP7 within the 7SK RNP complex occluding its catalytic center. Also required for stability of U6 snRNAs. This chain is 7SK snRNA methylphosphate capping enzyme, found in Mus musculus (Mouse).